Reading from the N-terminus, the 2219-residue chain is RNA-directed RNA polymerase L (2219 aa).

The interval 26 to 289 (KLAFLVQTEP…TTEDDVEYLI (264 aa)) is endonuclease. The Mn(2+) site is built by Glu51, Asp89, and Glu102. Residue Lys115 is part of the active site. The RdRp catalytic domain occupies 1177-1373 (LSMKLNVSLA…YMSDQLNKFV (197 aa)). Residue Asp1335 coordinates Mg(2+).

It belongs to the Bunyavirales RNA polymerase family. Homomultimer; the oligomeric structure is essential for the polymerase activity. Interacts with nucleoprotein N. Interacts with protein Z; this interaction inhibits viral transcription and replication, Z partially blocks the product exit tunnel for the releasing nascent RNA product. The cofactor is Mn(2+). Mg(2+) is required as a cofactor.

The protein localises to the virion. It localises to the host cytoplasm. It carries out the reaction RNA(n) + a ribonucleoside 5'-triphosphate = RNA(n+1) + diphosphate. Functionally, RNA-dependent RNA polymerase, which is responsible for the replication and transcription of the viral RNA genome using antigenomic RNA as an intermediate. During transcription, synthesizes subgenomic RNAs and assures their capping by a cap-snatching mechanism, which involves the endonuclease activity cleaving the host capped pre-mRNAs. These short capped RNAs are then used as primers for viral transcription. The 3'-end of subgenomic mRNAs molecules are heterogeneous and not polyadenylated. The replicase function is to direct synthesis of antigenomic and genomic RNA which are encapsidated and non capped. As a consequence of the use of the same enzyme for both transcription and replication, these mechanisms need to be well coordinated. These processes may be regulated by proteins N and Z in a dose-dependent manner. Z protein inhibits the viral polymerase L und thus the viral transcription and RNA synthesis. This chain is RNA-directed RNA polymerase L, found in Homo sapiens (Human).